We begin with the raw amino-acid sequence, 354 residues long: Clavesin-1 (354 aa).

In terms of domain architecture, CRAL-TRIO spans 118 to 279; it reads IKRALIDGFP…EFGGTLPPYD (162 aa). The disordered stretch occupies residues 317–354; that stretch reads RECSPKPMKRSQSVVEAGTLKHEEKGENENTQPLLALD. Basic and acidic residues predominate over residues 335-344; that stretch reads TLKHEEKGEN. The span at 345 to 354 shows a compositional bias: polar residues; it reads ENTQPLLALD.

As to quaternary structure, forms a complex with clathrin heavy chain and gamma-adaptin. In terms of tissue distribution, expressed in brain with no expression detected in non-neuronal tissues (at protein level).

It is found in the golgi apparatus. The protein resides in the trans-Golgi network membrane. Its subcellular location is the early endosome membrane. It localises to the cytoplasmic vesicle. The protein localises to the clathrin-coated vesicle. Required for normal morphology of late endosomes and/or lysosomes in neurons. Binds phosphatidylinositol 3,5-bisphosphate (PtdIns(3,5)P2). This is Clavesin-1 from Rattus norvegicus (Rat).